The primary structure comprises 95 residues: Aspartyl/glutamyl-tRNA(Asn/Gln) amidotransferase subunit C (95 aa).

It belongs to the GatC family. Heterotrimer of A, B and C subunits.

The catalysed reaction is L-glutamyl-tRNA(Gln) + L-glutamine + ATP + H2O = L-glutaminyl-tRNA(Gln) + L-glutamate + ADP + phosphate + H(+). The enzyme catalyses L-aspartyl-tRNA(Asn) + L-glutamine + ATP + H2O = L-asparaginyl-tRNA(Asn) + L-glutamate + ADP + phosphate + 2 H(+). Its function is as follows. Allows the formation of correctly charged Asn-tRNA(Asn) or Gln-tRNA(Gln) through the transamidation of misacylated Asp-tRNA(Asn) or Glu-tRNA(Gln) in organisms which lack either or both of asparaginyl-tRNA or glutaminyl-tRNA synthetases. The reaction takes place in the presence of glutamine and ATP through an activated phospho-Asp-tRNA(Asn) or phospho-Glu-tRNA(Gln). This Roseobacter denitrificans (strain ATCC 33942 / OCh 114) (Erythrobacter sp. (strain OCh 114)) protein is Aspartyl/glutamyl-tRNA(Asn/Gln) amidotransferase subunit C.